The chain runs to 168 residues: Nicotinamide-nucleotide adenylyltransferase (168 aa).

It belongs to the archaeal NMN adenylyltransferase family.

It localises to the cytoplasm. The enzyme catalyses beta-nicotinamide D-ribonucleotide + ATP + H(+) = diphosphate + NAD(+). It participates in cofactor biosynthesis; NAD(+) biosynthesis; NAD(+) from nicotinamide D-ribonucleotide: step 1/1. In Methanocorpusculum labreanum (strain ATCC 43576 / DSM 4855 / Z), this protein is Nicotinamide-nucleotide adenylyltransferase.